The following is a 381-amino-acid chain: Ecotin-like protein 3 (381 aa).

Residues Glu-232–Lys-381 are disordered. A compositionally biased stretch (polar residues) spans Asn-273 to Asn-292. The span at Arg-336 to Met-347 shows a compositional bias: basic and acidic residues. Residues Ser-363 to Gly-372 show a composition bias toward polar residues.

It belongs to the protease inhibitor I11 (ecotin) family.

In Leishmania major, this protein is Ecotin-like protein 3.